Reading from the N-terminus, the 121-residue chain is Large ribosomal subunit protein uL18 (121 aa).

It belongs to the universal ribosomal protein uL18 family. In terms of assembly, part of the 50S ribosomal subunit; part of the 5S rRNA/L5/L18/L25 subcomplex. Contacts the 5S and 23S rRNAs.

Functionally, this is one of the proteins that bind and probably mediate the attachment of the 5S RNA into the large ribosomal subunit, where it forms part of the central protuberance. This Methylibium petroleiphilum (strain ATCC BAA-1232 / LMG 22953 / PM1) protein is Large ribosomal subunit protein uL18.